Reading from the N-terminus, the 456-residue chain is Heme sensor protein HssS (456 aa).

Helical transmembrane passes span 9–29 (IAIY…LFAN) and 164–184 (TFLA…VIAS). An HAMP domain is found at 186-238 (YSIIKPIKILKQATERLMHGDFNSPIYQSRHDEIGTLQYRFEAMRQSLKQVDD). The Histidine kinase domain maps to 246–456 (NVSHEIKTPL…TFTVTLPETN (211 aa)). Residue H249 is modified to Phosphohistidine; by autocatalysis.

Autophosphorylated.

It is found in the cell membrane. The enzyme catalyses ATP + protein L-histidine = ADP + protein N-phospho-L-histidine.. Member of the two-component regulatory system HssS/HssR involved in intracellular heme homeostasis and tempering of staphylococcal virulence. HssS functions as a heme sensor histidine kinase which is autophosphorylated at a histidine residue and transfers its phosphate group to an aspartate residue of HssR. HssR/HssS activates the expression of hrtAB, an efflux pump, in response to extracellular heme, hemin, hemoglobin or blood. In Staphylococcus haemolyticus (strain JCSC1435), this protein is Heme sensor protein HssS (hssS).